A 420-amino-acid chain; its full sequence is Histidine--tRNA ligase (420 aa).

This sequence belongs to the class-II aminoacyl-tRNA synthetase family. As to quaternary structure, homodimer.

The protein localises to the cytoplasm. It catalyses the reaction tRNA(His) + L-histidine + ATP = L-histidyl-tRNA(His) + AMP + diphosphate + H(+). In Ureaplasma parvum serovar 3 (strain ATCC 27815 / 27 / NCTC 11736), this protein is Histidine--tRNA ligase.